A 128-amino-acid polypeptide reads, in one-letter code: Glycine cleavage system H protein (128 aa).

In terms of domain architecture, Lipoyl-binding spans 22–104; the sequence is TALVGVTDYA…YASGWLVKIK (83 aa). Residue Lys63 is modified to N6-lipoyllysine.

Belongs to the GcvH family. The glycine cleavage system is composed of four proteins: P, T, L and H. It depends on (R)-lipoate as a cofactor.

In terms of biological role, the glycine cleavage system catalyzes the degradation of glycine. The H protein shuttles the methylamine group of glycine from the P protein to the T protein. The protein is Glycine cleavage system H protein of Halothermothrix orenii (strain H 168 / OCM 544 / DSM 9562).